The sequence spans 465 residues: Presenilin spe-4 (465 aa).

Topologically, residues 1–18 (MDTLRSISSELVRSSQLR) are cytoplasmic. A helical transmembrane segment spans residues 19–39 (WTLFSVIANMSLTLSIWIGVY). Residues 40–71 (NMEVNSELSKTYFLDPSFEQTTGNLLLDGFIN) lie on the Lumenal side of the membrane. Residues 72–92 (GVGTILVLGCVSFIMLAFVLF) form a helical membrane-spanning segment. The Cytoplasmic segment spans residues 93-96 (DFRR). Residues 97–117 (IVKAWLTLSCLLILFGVSAQT) traverse the membrane as a helical segment. At 118–136 (LHDMFSQVFDQDDNNQYYM) the chain is on the lumenal side. A helical transmembrane segment spans residues 137-157 (TIVLIVVPTVVYGFGGIYAFF). The Cytoplasmic segment spans residues 158 to 160 (SNS). A helical transmembrane segment spans residues 161 to 181 (SLILHQIFVVTNCSLISVFYL). Topologically, residues 182–190 (RVFPSKTTW) are lumenal. The helical transmembrane segment at 191–211 (FVLWIVLFWDLFAVLAPMGPL) threads the bilayer. Asp200 is an active-site residue. Residues 212 to 389 (KKVQEKASDY…DALNDGEVLR (178 aa)) lie on the Cytoplasmic side of the membrane. The disordered stretch occupies residues 287–356 (INPDSVPTEH…SDISTAEECD (70 aa)). The segment covering 326–350 (SETSSGSSNLSSSDSSTTVSTSDIS) has biased composition (low complexity). The helical transmembrane segment at 390–410 (LGFGDFVFYSLLIGQAAASGC) threads the bilayer. Asp394 is a catalytic residue. Residue Pro411 is a topological domain, lumenal. The chain crosses the membrane as a helical span at residues 412–432 (FAVISAALGILFGLVVTLTVF). Residues 433–439 (STEESTT) lie on the Cytoplasmic side of the membrane. The PAL signature appears at 440–442 (PAL). Positions 440-460 (PALPLPVICGTFCYFSSMFFW) form an intramembrane region, helical. The Cytoplasmic portion of the chain corresponds to 461–465 (EQLYG).

The protein belongs to the peptidase A22A family. In terms of assembly, homodimer. Potential component of the gamma-secretase complex, a complex probably composed of the presenilin homodimer (sel-12, hop-1 or spe-4), nicastrin (aph-2), aph-1 and pen-2.

The protein resides in the endoplasmic reticulum membrane. It is found in the golgi apparatus. Its subcellular location is the cis-Golgi network membrane. Potential catalytic subunit of the gamma-secretase complex during spermatogenesis, an endoprotease complex that catalyzes the intramembrane cleavage of integral membrane proteins such as Notch receptors (lin-12 or glp-1). Involved in spermatid formation during meiosis II. May be required for proper localization of macromolecules that are subject to asymmetric partitioning during spermatogenesis. This chain is Presenilin spe-4, found in Caenorhabditis elegans.